The primary structure comprises 446 residues: Signal recognition particle protein (446 aa).

GTP contacts are provided by residues 106-113 (GLQGSGKT), 188-192 (DTAGR), and 246-249 (SKLD).

This sequence belongs to the GTP-binding SRP family. SRP54 subfamily. As to quaternary structure, part of the signal recognition particle protein translocation system, which is composed of SRP and FtsY.

The protein resides in the cytoplasm. The catalysed reaction is GTP + H2O = GDP + phosphate + H(+). Its function is as follows. Involved in targeting and insertion of nascent membrane proteins into the cytoplasmic membrane. Binds to the hydrophobic signal sequence of the ribosome-nascent chain (RNC) as it emerges from the ribosomes. The SRP-RNC complex is then targeted to the cytoplasmic membrane where it interacts with the SRP receptor FtsY. The chain is Signal recognition particle protein from Mycoplasma genitalium (strain ATCC 33530 / DSM 19775 / NCTC 10195 / G37) (Mycoplasmoides genitalium).